Here is a 99-residue protein sequence, read N- to C-terminus: Complement inhibitor RaCI7 (99 aa).

An N-terminal signal peptide occupies residues 1–24 (MAALNGLVLLLLTISAMFISECYS). Intrachain disulfides connect cysteine 37–cysteine 61, cysteine 42–cysteine 63, and cysteine 57–cysteine 78.

The protein belongs to the RaCI family. In terms of tissue distribution, expressed in salivary glands.

The protein resides in the secreted. Functionally, complement inhibitor. Prevents complement-mediated C5 activation by binding to C5. Binds C5 at a different binding site than the other tick complement inhibitors OmCI and CirpT1, and the drug eculizumab. This Dermacentor andersoni (Rocky mountain wood tick) protein is Complement inhibitor RaCI7.